A 381-amino-acid polypeptide reads, in one-letter code: Formate dehydrogenase, mitochondrial (381 aa).

A mitochondrion-targeting transit peptide spans 1–25 (MAMSRVASTAARAITSPSSLVFTRE). Positions 125 and 149 each coordinate substrate. NAD(+) is bound by residues Thr150, 204–205 (RI), Asp224, 259–263 (PLTEK), Asn285, Asp311, and 335–338 (HISG).

It belongs to the D-isomer specific 2-hydroxyacid dehydrogenase family. FDH subfamily. Homodimer. In terms of tissue distribution, found at high levels in developing tubers, at intermediate level in stems, veins, stolons, and stamens, and at low level in leaves and roots.

The protein localises to the mitochondrion. It catalyses the reaction formate + NAD(+) = CO2 + NADH. In terms of biological role, catalyzes the NAD(+)-dependent oxidation of formate to carbon dioxide. Involved in the cell stress response. Involved in formate-dependent oxygen uptake coupled to ATP synthesis. This chain is Formate dehydrogenase, mitochondrial, found in Solanum tuberosum (Potato).